A 661-amino-acid polypeptide reads, in one-letter code: Peroxisomal acyl-coenzyme A oxidase 1 (661 aa).

Ser-26 bears the Phosphoserine mark. Lys-65 carries the post-translational modification N6-acetyllysine. Residues Lys-89 and Lys-90 each carry the N6-succinyllysine modification. Thr-139 contacts FAD. The residue at position 159 (Lys-159) is an N6-succinyllysine. FAD is bound at residue Gly-178. Lys-216 carries the N6-acetyllysine modification. Position 241 is an N6-succinyllysine (Lys-241). N6-acetyllysine occurs at positions 255, 267, and 272. Lys-349 carries the N6-succinyllysine modification. Glu-421 (proton acceptor) is an active-site residue. N6-acetyllysine; alternate occurs at positions 437 and 446. N6-succinyllysine; alternate occurs at positions 437 and 446. Lys-500 carries the N6-acetyllysine modification. At Lys-512 the chain carries N6-acetyllysine; alternate. Position 512 is an N6-succinyllysine; alternate (Lys-512). Lys-542 bears the N6-succinyllysine mark. At Lys-637 the chain carries N6-acetyllysine; alternate. Residue Lys-637 is modified to N6-succinyllysine; alternate. Lys-643 bears the N6-succinyllysine mark. Ser-649 bears the Phosphoserine mark. The residue at position 652 (Lys-652) is an N6-acetyllysine. At Lys-655 the chain carries N6-succinyllysine. Positions 659 to 661 match the Microbody targeting signal motif; it reads SKL.

This sequence belongs to the acyl-CoA oxidase family. In terms of assembly, homodimer. The enzyme contains three components A, B and C, the latter two being produced from the first by a proteolytic cleavage. Interacts with LONP2. FAD is required as a cofactor. Expressed in Schwann cells. Expressed (at protein level) in liver.

It localises to the peroxisome. It catalyses the reaction a 2,3-saturated acyl-CoA + O2 = a (2E)-enoyl-CoA + H2O2. The catalysed reaction is hexadecanoyl-CoA + O2 = (2E)-hexadecenoyl-CoA + H2O2. It carries out the reaction dodecanoyl-CoA + O2 = (2E)-dodecenoyl-CoA + H2O2. The enzyme catalyses octanoyl-CoA + O2 = (2E)-octenoyl-CoA + H2O2. It catalyses the reaction decanoyl-CoA + O2 = (2E)-decenoyl-CoA + H2O2. The catalysed reaction is tetradecanoyl-CoA + O2 = (2E)-tetradecenoyl-CoA + H2O2. It carries out the reaction hexadecanedioyl-CoA + O2 = (2E)-hexadecenedioyl-CoA + H2O2. The enzyme catalyses tetracosanoyl-CoA + O2 = (2E)-tetracosenoyl-CoA + H2O2. It catalyses the reaction glutaryl-CoA + O2 = (2E)-glutaconyl-CoA + H2O2. The catalysed reaction is hexanoyl-CoA + O2 = (2E)-hexenoyl-CoA + H2O2. It carries out the reaction octadecanoyl-CoA + O2 = (2E)-octadecenoyl-CoA + H2O2. The enzyme catalyses (5Z,8Z,11Z,14Z,17Z)-eicosapentaenoyl-CoA + O2 = (2E,5Z,8Z,11Z,14Z,17Z)-icosahexaenoyl-CoA + H2O2. It catalyses the reaction (6Z,9Z,12Z,15Z,18Z,21Z)-tetracosahexaenoyl-CoA + O2 = (2E,6Z,9Z,12Z,15Z,18Z,21Z)-tetracosaheptaenoyl-CoA + H2O2. Its pathway is lipid metabolism; peroxisomal fatty acid beta-oxidation. Involved in the initial and rate-limiting step of peroxisomal beta-oxidation of straight-chain saturated and unsaturated very-long-chain fatty acids. Catalyzes the desaturation of fatty acyl-CoAs such as palmitoyl-CoA (hexadecanoyl-CoA) to 2-trans-enoyl-CoAs ((2E)-enoyl-CoAs) such as (2E)-hexadecenoyl-CoA, and donates electrons directly to molecular oxygen (O(2)), thereby producing hydrogen peroxide (H(2)O(2)). In terms of biological role, shows highest activity against medium-chain fatty acyl-CoAs. Shows optimum activity with a chain length of 10 carbons (decanoyl-CoA) in vitro. Functionally, is active against a much broader range of substrates and shows activity towards long-chain acyl-CoAs. In Rattus norvegicus (Rat), this protein is Peroxisomal acyl-coenzyme A oxidase 1.